The primary structure comprises 174 residues: Transcription factor bHLH36 (174 aa).

The bHLH domain occupies 1-53 (MEKMMHRETERQRRQEMASLYASLRSLLPLHFIKGKRSTSDQVNEAVNYIKYL).

In terms of assembly, homodimer. Expressed constitutively in roots, leaves, stems, and flowers.

The protein resides in the nucleus. This Arabidopsis thaliana (Mouse-ear cress) protein is Transcription factor bHLH36 (BHLH36).